Here is a 409-residue protein sequence, read N- to C-terminus: Autophagy-related protein 37 (409 aa).

Residues 1–313 (MSESIDRVFV…LKLIKTVIKH (313 aa)) are Cytoplasmic-facing. Positions 5-103 (IDRVFVKAIG…LIDTMKQFAS (99 aa)) constitute an ACB domain. The helical transmembrane segment at 314–334 (VAIDAVIIAVLVAVIKRSIII) threads the bilayer. Residues 335–409 (PNLISNEISL…VSRIRLIKRN (75 aa)) lie on the Peroxisomal side of the membrane.

Belongs to the ATG37 family. As to quaternary structure, interacts with ATG30 and PEX3. Phosphorylated.

The protein localises to the peroxisome membrane. Acyl-CoA binding protein which acts as the peroxisome receptor for pexophagy. Required for both micropexophagy and macropexophagy, but not for the cytoplasm to vacuole transport (Cvt) or autophagy pathways. Required for functional micropexophagic apparatus (MIPA) and relocation of ATG11 to the peroxisome-sequestering arms of the vacuole. Binds palmitoyl-CoA but not oleyl-CoA. The polypeptide is Autophagy-related protein 37 (Komagataella phaffii (strain GS115 / ATCC 20864) (Yeast)).